Consider the following 850-residue polypeptide: MPSYLTRQKTRKIFSWVGRPLPDRKHNHQIYKEMRMKVNDCSTEIHIKVGQFVLIKGNNNAKPYVAKLIELFEDGSKFHSKKCARVQWCVRFSEIPISKRHLLGRKPAAQEIFWYDDPDCGNNICVETIIGPVQVVALAPDEVIPMDQKSEDTLFVKLSWNTKNFEPLSPEVLAALKKLEDSPKCQKPLEGKSKNVKNPSWNATEQMVKRIESSHSTSKSCQTSAHPVSPNARKPLELSDSDIPRKPNMRLSQKILCDSLDSQKNSKRKTAFSETASPPKRCQPGEIKNLSPLKTLEKNGQAHSFCDKGSMILRAQDPSFITTKISMERALDPVRSRLRPSVMLTSILTPKRTGREAGKQEAHTEPTRTSHRVHRRSSLLTLNRIRQQLWLLDDDKSDQEEEESISSAEVSDSTSEEEDDSIPSLLKRNSQPQSRNRRMASKPSLQTPSKTPKKTTHHPTPQIRGRNIAVQEPTSVLEEARLMLHVSAVPDSLPCREQEFQDIYSFVESKLLDGTGGCMYISGVPGTGKTATVNEVIRCLQQAAQTNDVPPFEYVDVNGMKLTEPHQVYVQILQKLTGQKATANHAAQLLAKRFCSQGSQQETTVLLVDELDLLWTSKQDVMYNLFDWPTHKGARLIVLAIANTMDLPERIMMNRVSSRLGLTRMSFQPYSHNQLKEILVSRLKHLKAFEDDAIQLVARKVAALSGDARRCLDICRRATEICELSHNHGNSLGPVTVSHLMEAIDEMFSSSYITAIKNCSLLEQGFLRAIIAEFRRSGLEEATFQQIYSQHVALCRMEGLPYPTMSETMAVCSNLGSCRLLLVEPSRNDLLLRVRLNVSQDDVLYALKEE.

The region spanning 45 to 171 is the BAH domain; sequence IHIKVGQFVL…TKNFEPLSPE (127 aa). The interval 209-286 is disordered; it reads KRIESSHSTS…SPPKRCQPGE (78 aa). The segment covering 214–224 has biased composition (low complexity); sequence SHSTSKSCQTS. A compositionally biased stretch (basic and acidic residues) spans 234–245; it reads KPLELSDSDIPR. 3 positions are modified to phosphoserine: S259, S277, and S291. 2 disordered regions span residues 349–376 and 393–469; these read TPKR…VHRR and DDDK…RNIA. Residues 353–368 show a composition bias toward basic and acidic residues; sequence TGREAGKQEAHTEPTR. The span at 395-404 shows a compositional bias: acidic residues; the sequence is DKSDQEEEES. The residue at position 411 (S411) is a Phosphoserine. Residues V489 and 523–531 contribute to the ATP site; that span reads GVPGTGKTA. The Mg(2+) site is built by D609 and E610. ATP-binding residues include E610, N643, and R709.

It belongs to the ORC1 family. In terms of assembly, component of ORC, a complex composed of at least 6 subunits: ORC1, ORC2, ORC3, ORC4, ORC5 and ORC6. ORC is regulated in a cell-cycle dependent manner. It is sequentially assembled at the exit from anaphase of mitosis and disassembled as cells enter S phase. Interacts with CDC6 and KAT7/HBO1. Interacts with LRWD1 predominantly during the G1 phase and with less affinity during mitosis, when phosphorylated. Phosphorylated during mitosis.

Its subcellular location is the nucleus. In terms of biological role, component of the origin recognition complex (ORC) that binds origins of replication. DNA-binding is ATP-dependent. The specific DNA sequences that define origins of replication have not been identified yet. ORC is required to assemble the pre-replication complex necessary to initiate DNA replication. The chain is Origin recognition complex subunit 1 (ORC1) from Cricetulus griseus (Chinese hamster).